Reading from the N-terminus, the 776-residue chain is Genome polyprotein (776 aa).

The segment at M1–R27 is disordered. Over M1–T98 the chain is Cytoplasmic. Positions R17–R27 are enriched in basic residues. Positions M33–L68 are hydrophobic; homodimerization of capsid protein C. Positions T97–A117 are cleaved as a propeptide — ER anchor for the protein C, removed in mature form by serine protease NS3. The chain crosses the membrane as a helical span at residues I99–A117. Over T118–W242 the chain is Extracellular. The N-linked (GlcNAc...) asparagine; by host glycan is linked to N144. The helical transmembrane segment at K243–D260 threads the bilayer. Position 261 (G261) is a topological domain, cytoplasmic. The helical transmembrane segment at L262–A280 threads the bilayer. At S281–T727 the chain is on the extracellular side. 4 disulfides stabilise this stretch: C283-C310, C340-C396, C354-C385, and C372-C401. N434 carries an N-linked (GlcNAc...) asparagine; by host glycan. Intrachain disulfides connect C466–C570 and C587–C618. The segment at residues L728–G748 is an intramembrane region (helical). The Extracellular segment spans residues L749 to T755. The helical intramembrane region spans L756–A776.

In terms of processing, specific enzymatic cleavages in vivo yield mature proteins Peptide 2K acts as a signal sequence and is removed from the N-terminus of NS4B by the host signal peptidase in the ER lumen. Signal cleavage at the 2K-4B site requires a prior NS3 protease-mediated cleavage at the 4A-2K site.

It is found in the virion. It localises to the secreted. The protein resides in the virion membrane. The protein localises to the host endoplasmic reticulum membrane. Its function is as follows. Capsid protein C self-assembles to form an icosahedral capsid about 30 nm in diameter. The capsid encapsulates the genomic RNA. PrM acts as a chaperone for envelope protein E during intracellular virion assembly by masking and inactivating envelope protein E fusion peptide. prM is matured in the last step of virion assembly, presumably to avoid catastrophic activation of the viral fusion peptide induced by the acidic pH of the trans-Golgi network. After cleavage by host furin, the pr peptide is released in the extracellular medium and small envelope protein M and envelope protein E homodimers are dissociated. In terms of biological role, envelope protein E binding to host cell surface receptor is followed by virus internalization through clathrin-mediated endocytosis. Envelope protein E is subsequently involved in membrane fusion between virion and host late endosomes. Synthesized as a homodimer with prM which acts as a chaperone for envelope protein E. After cleavage of prM, envelope protein E dissociate from small envelope protein M and homodimerizes. The sequence is that of Genome polyprotein from Homo sapiens (Human).